A 288-amino-acid chain; its full sequence is N-glycosylase/DNA lyase (288 aa).

8-oxoguanine contacts are provided by glutamine 35, serine 62, and tryptophan 73. The tract at residues 134-203 is helix-hairpin-helix; sequence NPLVLVERPS…VACASISSEM (70 aa). Lysine 160 (schiff-base intermediate with DNA) is an active-site residue. Phenylalanine 164 and proline 189 together coordinate 8-oxoguanine. The active site involves aspartate 191. 2 residues coordinate 8-oxoguanine: aspartate 238 and tryptophan 242.

This sequence belongs to the archaeal N-glycosylase/DNA lyase (AGOG) family.

The enzyme catalyses 2'-deoxyribonucleotide-(2'-deoxyribose 5'-phosphate)-2'-deoxyribonucleotide-DNA = a 3'-end 2'-deoxyribonucleotide-(2,3-dehydro-2,3-deoxyribose 5'-phosphate)-DNA + a 5'-end 5'-phospho-2'-deoxyribonucleoside-DNA + H(+). Its function is as follows. DNA repair enzyme that is part of the base excision repair (BER) pathway; protects from oxidative damage by removing the major product of DNA oxidation, 8-oxoguanine (GO), from single- and double-stranded DNA substrates. This chain is N-glycosylase/DNA lyase, found in Aeropyrum pernix (strain ATCC 700893 / DSM 11879 / JCM 9820 / NBRC 100138 / K1).